The following is a 450-amino-acid chain: UDP-N-acetylmuramoylalanine--D-glutamate ligase (450 aa).

119–125 (GSNGKTT) contributes to the ATP binding site.

This sequence belongs to the MurCDEF family.

The protein resides in the cytoplasm. The catalysed reaction is UDP-N-acetyl-alpha-D-muramoyl-L-alanine + D-glutamate + ATP = UDP-N-acetyl-alpha-D-muramoyl-L-alanyl-D-glutamate + ADP + phosphate + H(+). The protein operates within cell wall biogenesis; peptidoglycan biosynthesis. Functionally, cell wall formation. Catalyzes the addition of glutamate to the nucleotide precursor UDP-N-acetylmuramoyl-L-alanine (UMA). This is UDP-N-acetylmuramoylalanine--D-glutamate ligase from Streptococcus pneumoniae (strain JJA).